We begin with the raw amino-acid sequence, 234 residues long: Small ribosomal subunit protein uS3 (234 aa).

Residues 17–86 (VEKFLTKELK…SPQVEVQQVQ (70 aa)) form the KH type-2 domain.

It belongs to the universal ribosomal protein uS3 family. In terms of assembly, part of the 30S ribosomal subunit.

Functionally, binds the lower part of the 30S subunit head. The protein is Small ribosomal subunit protein uS3 of Methanoculleus marisnigri (strain ATCC 35101 / DSM 1498 / JR1).